Reading from the N-terminus, the 115-residue chain is DNA-binding protein PH1060 (115 aa).

This sequence belongs to the PDCD5 family.

This Pyrococcus horikoshii (strain ATCC 700860 / DSM 12428 / JCM 9974 / NBRC 100139 / OT-3) protein is DNA-binding protein PH1060.